The sequence spans 381 residues: MAIDSPSPATDSIRVMLVDDSAVVRGLVTRILEGEAGIQVVASVGNGQMALASLERNEIDVVILDIEMPVMDGLTALPKLLQIDPGLKVIMQSTLTLKGADVSLRAMQMGAADYIPKPTSTRDLAGGVDFKSELVTKIRALGQARRAGARPARPGGPPATRPVIASTSPRTPVPIHPPGPLQLRSNTPEPPDIIAIGSSTGGPQALFTVLGTMKAGTVRQPIVITQHMPATFTTILAEHIGRVSGWEAREAQDGEAIRGGRVYIAPGDFHMVVETKGTDKVLRLNKNPPENFCRPAVDPMLRSIAAAYGKRVLACILTGMGADGMKGGQAVVASGGTVIAQDEASSVVWGMPGAAATAGICSAVLPLPEIAPWIMKLAARR.

In terms of domain architecture, Response regulatory spans 14–132 (RVMLVDDSAV…DLAGGVDFKS (119 aa)). A 4-aspartylphosphate modification is found at D65. Residues 143 to 173 (QARRAGARPARPGGPPATRPVIASTSPRTPV) are disordered. Over residues 144–153 (ARRAGARPAR) the composition is skewed to low complexity. The 194-residue stretch at 188-381 (PEPPDIIAIG…PWIMKLAARR (194 aa)) folds into the CheB-type methylesterase domain. Residues S199, H227, and D323 contribute to the active site.

The protein belongs to the CheB family. In terms of processing, phosphorylated by CheA. Phosphorylation of the N-terminal regulatory domain activates the methylesterase activity.

The protein resides in the cytoplasm. It catalyses the reaction [protein]-L-glutamate 5-O-methyl ester + H2O = L-glutamyl-[protein] + methanol + H(+). The catalysed reaction is L-glutaminyl-[protein] + H2O = L-glutamyl-[protein] + NH4(+). Involved in chemotaxis. Part of a chemotaxis signal transduction system that modulates chemotaxis in response to various stimuli. Catalyzes the demethylation of specific methylglutamate residues introduced into the chemoreceptors (methyl-accepting chemotaxis proteins or MCP) by CheR. Also mediates the irreversible deamidation of specific glutamine residues to glutamic acid. The protein is Protein-glutamate methylesterase/protein-glutamine glutaminase 1 of Paramagnetospirillum magneticum (strain ATCC 700264 / AMB-1) (Magnetospirillum magneticum).